An 842-amino-acid polypeptide reads, in one-letter code: MPLSYQHFRKLLLLDDEAGPLEEELPRLADEDLNRRVAEDLNLGNLNVSIPWTHKVGNFTGLYSSTVPVFNPEWQTPSFPHIHLQEDIINRCQQYVGPLTVNEKRRLKLIMPARFYPKLTKYLPLDKGIKPYYPEHAVNHYFKTRHYLHTLWKAGILYKRETTRSASFCGSPYSWEQELQHGRLVFQTSTRHGDESFCSQSSGILSRSPVGPCVRSQLKQSRLGLQPQQGSLARGKSGRSGSIRARVPPTTRRSFGVEPSGSGHIDNRASSTSSCLHQSAVRKTAYSHLSTSKRQSSSGHAVELHHISPSPARSQSEGPIFSSWWLQFRNSKPCSDYCLTHIVNLLEDWGPCTEHGEHNIRIPRTPARVTGGVFLVDKNPHNTTESRLVVDFSQFSRGSTHVSWPKFAVPNLQSLTNLLSSNLSWLSLDVSAAFYHIPLHPAAMPHLLVGSSGLPRYVARLSSTSRNINHQHGTMQDLHDSCSRNLYVSLLLLYKTFGRKLHLYSHPIILGFRKIPMGGGLSPFLLAQFTSAICSVVRRAFPHCLAFSYMDDVVLGAKSVQHLESLFTSITNFLLSLGIHLNPNKTKRWGYSLNFMGYVIGSWGTLPQEHIVLKIKQCFRKLPVNRPIDWKVCQRIVGLLGFAAPFTQCGYPALMPLYACIQSKQAFTFSPTYKAFLCKQYLHLYPVARRTALCQVFADATPTGWGLAIGHRRMRGTFVAPLPIHTAELLAACFARSRSGAKLIGTDNSVVLSRKYTSFPWLLGCAANWILRGTYFVYVPSALNPADDPSRGRLGLIRPLLHLRFRPTTGRTSLYAVSPSVPSHLPDRVHFASPLHVAWRPP.

A terminal protein domain (TP) region spans residues 1–177 (MPLSYQHFRK…FCGSPYSWEQ (177 aa)). A spacer region spans residues 178–346 (ELQHGRLVFQ…YCLTHIVNLL (169 aa)). The interval 218 to 274 (LKQSRLGLQPQQGSLARGKSGRSGSIRARVPPTTRRSFGVEPSGSGHIDNRASSTSS) is disordered. The tract at residues 347–690 (EDWGPCTEHG…YLHLYPVARR (344 aa)) is polymerase/reverse transcriptase domain (RT). The region spanning 357-600 (EHNIRIPRTP…YSLNFMGYVI (244 aa)) is the Reverse transcriptase domain. Asp429, Asp551, and Asp552 together coordinate Mg(2+).

Belongs to the hepadnaviridae P protein family.

It carries out the reaction DNA(n) + a 2'-deoxyribonucleoside 5'-triphosphate = DNA(n+1) + diphosphate. The catalysed reaction is Endonucleolytic cleavage to 5'-phosphomonoester.. Activated by host HSP70 and HSP40 in vitro to be able to bind the epsilon loop of the pgRNA. Because deletion of the RNase H region renders the protein partly chaperone-independent, the chaperones may be needed indirectly to relieve occlusion of the RNA-binding site by this domain. Inhibited by several reverse-transcriptase inhibitors: Lamivudine, Adefovir and Entecavir. In terms of biological role, multifunctional enzyme that converts the viral RNA genome into dsDNA in viral cytoplasmic capsids. This enzyme displays a DNA polymerase activity that can copy either DNA or RNA templates, and a ribonuclease H (RNase H) activity that cleaves the RNA strand of RNA-DNA heteroduplexes in a partially processive 3'- to 5'-endonucleasic mode. Neo-synthesized pregenomic RNA (pgRNA) are encapsidated together with the P protein, and reverse-transcribed inside the nucleocapsid. Initiation of reverse-transcription occurs first by binding the epsilon loop on the pgRNA genome, and is initiated by protein priming, thereby the 5'-end of (-)DNA is covalently linked to P protein. Partial (+)DNA is synthesized from the (-)DNA template and generates the relaxed circular DNA (RC-DNA) genome. After budding and infection, the RC-DNA migrates in the nucleus, and is converted into a plasmid-like covalently closed circular DNA (cccDNA). The activity of P protein does not seem to be necessary for cccDNA generation, and is presumably released from (+)DNA by host nuclear DNA repair machinery. In Hepatitis B virus genotype C subtype adr (isolate Korea/Kim/1989) (HBV-C), this protein is Protein P.